The following is a 113-amino-acid chain: Protein CTLA-2-beta (113 aa).

2 consecutive repeat copies span residues 15–17 and 18–20. The segment at 15–20 is 2 X 3 AA tandem repeats of E-W-K; that stretch reads EWKEWK.

To the propeptide regions of cysteine proteases.

In terms of biological role, not known, expressed in activated T-cell. The protein is Protein CTLA-2-beta (Ctla2b) of Mus musculus (Mouse).